The primary structure comprises 519 residues: Protein twist (519 aa).

Disordered stretches follow at residues 53-77, 131-156, 301-321, and 368-389; these read MQQQQQQQQHQQQQQQHQQQQQQQY, NFEQQQQQQQQQQQQQTATPAGVATA, YEAYDPANSLNGSTYSSSDRD, and FRKPRRRLKRKPSKTEETDEFS. Composition is skewed to low complexity over residues 54 to 76 and 134 to 146; these read QQQQQQQQHQQQQQQHQQQQQQQ and QQQQQQQQQQQQQ. A compositionally biased stretch (polar residues) spans 308–317; it reads NSLNGSTYSS. Over residues 368–379 the composition is skewed to basic residues; that stretch reads FRKPRRRLKRKP. Residues 390-441 form the bHLH domain; the sequence is NQRVMANVRERQRTQSLNDAFKALQQIIPTLPSDKLSKIQTLKLATRYIDFL.

As to quaternary structure, efficient DNA binding requires dimerization with another bHLH protein. Homodimer.

It is found in the nucleus. Involved in the establishment and dorsoventral patterning of germ layers in the embryo. The chain is Protein twist from Drosophila virilis (Fruit fly).